The sequence spans 126 residues: Histone H2B 3 (126 aa).

Over residues 1-12 the composition is skewed to low complexity; it reads MPEPAKSAPAPK. The tract at residues 1–34 is disordered; it reads MPEPAKSAPAPKKGSKKAVTKTQKKGDKKRRKTR. Residues Lys6 and Lys13 each carry the N6-acetyllysine modification. Residues 13–34 show a composition bias toward basic residues; it reads KGSKKAVTKTQKKGDKKRRKTR. At Ser15 the chain carries Phosphoserine. Residues Lys16 and Lys21 each carry the N6-acetyllysine modification. Residue Ser113 is glycosylated (O-linked (GlcNAc) serine). Residue Lys121 forms a Glycyl lysine isopeptide (Lys-Gly) (interchain with G-Cter in ubiquitin) linkage.

This sequence belongs to the histone H2B family. The nucleosome is a histone octamer containing two molecules each of H2A, H2B, H3 and H4 assembled in one H3-H4 heterotetramer and two H2A-H2B heterodimers. The octamer wraps approximately 147 bp of DNA. In terms of processing, monoubiquitination of Lys-121 by the BRE1 gives a specific tag for epigenetic transcriptional activation and is also prerequisite for histone H3 'Lys-4' and 'Lys-79' methylation. Post-translationally, phosphorylated on Ser-15 during apoptosis; which facilitates apoptotic chromatin condensation. GlcNAcylation at Ser-113 promotes monoubiquitination of Lys-121. It fluctuates in response to extracellular glucose, and associates with transcribed genes.

The protein localises to the nucleus. The protein resides in the chromosome. Functionally, core component of nucleosome. Nucleosomes wrap and compact DNA into chromatin, limiting DNA accessibility to the cellular machineries which require DNA as a template. Histones thereby play a central role in transcription regulation, DNA repair, DNA replication and chromosomal stability. DNA accessibility is regulated via a complex set of post-translational modifications of histones, also called histone code, and nucleosome remodeling. The protein is Histone H2B 3 (hist2h2l) of Danio rerio (Zebrafish).